Here is a 213-residue protein sequence, read N- to C-terminus: Retinitis pigmentosa 9 protein homolog (213 aa).

The disordered stretch occupies residues 1–61 (MSSGAGSRRP…IKEDETKPED (61 aa)). The PIM1-binding stretch occupies residues 1-147 (MSSGAGSRRP…RENKRHEKDV (147 aa)). Composition is skewed to basic and acidic residues over residues 9 to 21 (RPRE…LQRR) and 52 to 61 (IKEDETKPED). The segment at 96 to 114 (QCWRCKRYGHRTGDKECPF) adopts a CCHC-type zinc-finger fold. K121 participates in a covalent cross-link: Glycyl lysine isopeptide (Lys-Gly) (interchain with G-Cter in SUMO2). The tract at residues 154 to 213 (QLLEDSTSDDDGSSSSSSGDREKRKKRKKKEKHKKRKKEKKKKKKRKHKASKSSESSDSE) is disordered. A compositionally biased stretch (basic residues) spans 176 to 204 (KRKKRKKKEKHKKRKKEKKKKKKRKHKAS). 2 positions are modified to phosphoserine; by PIM1; in vitro: S204 and S206.

Binds to PIM1. Binds to ZNHIT4. Highly expressed in the testis, moderately in the kidney, liver and spleen, and weakly in the skeletal muscle and heart.

It is found in the nucleus. In terms of biological role, is thought to be a target protein for the PIM1 kinase. May play some roles in B-cell proliferation in association with PIM1. The protein is Retinitis pigmentosa 9 protein homolog (rp9) of Mus musculus (Mouse).